Here is a 105-residue protein sequence, read N- to C-terminus: N(4)-acetylcytidine amidohydrolase (105 aa).

In terms of domain architecture, ASCH spans 7–93 (TFFERFEHDI…VIAEIYPGLE (87 aa)). The active-site Proton acceptor is the K21. T24 serves as the catalytic Nucleophile. E74 functions as the Proton donor in the catalytic mechanism.

Belongs to the N(4)-acetylcytidine amidohydrolase family.

It carries out the reaction N(4)-acetylcytidine + H2O = cytidine + acetate + H(+). The enzyme catalyses N(4)-acetyl-2'-deoxycytidine + H2O = 2'-deoxycytidine + acetate + H(+). The catalysed reaction is N(4)-acetylcytosine + H2O = cytosine + acetate + H(+). In terms of biological role, catalyzes the hydrolysis of N(4)-acetylcytidine (ac4C). This is N(4)-acetylcytidine amidohydrolase from Shewanella baltica (strain OS155 / ATCC BAA-1091).